The chain runs to 294 residues: MLENLSTEHRNEKTMNLDEMNIKEVLQSMNEEDRTVALAVEKEIEHIEKVVRVVIQSFEEEGRLIYIGAGTSGRLGILDAVECPPTFGTDDKMVQGFIAGGLKAFTKAVEGAEDREELAEEDLKSIGLNEKDTVIGIAASGRTPYVIGGLKYANSVGASTASISCNKNAEISKYAKLNVEVETGAEILTGSTRLKAGTAQKLVLNMISTASMIGVGKVYKNLMVDVQSTNEKLVERSKRIIVEATGVSYEVAAEHYEKAERNVKAAIVMVLLQCEYGEALEKLKQAKGFVKKAL.

The SIS domain occupies 54 to 217 (VIQSFEEEGR…STASMIGVGK (164 aa)). Glu82 functions as the Proton donor in the catalytic mechanism. The active site involves Glu113.

Belongs to the GCKR-like family. MurNAc-6-P etherase subfamily. As to quaternary structure, homodimer.

It carries out the reaction N-acetyl-D-muramate 6-phosphate + H2O = N-acetyl-D-glucosamine 6-phosphate + (R)-lactate. Its pathway is amino-sugar metabolism; N-acetylmuramate degradation. Its function is as follows. Specifically catalyzes the cleavage of the D-lactyl ether substituent of MurNAc 6-phosphate, producing GlcNAc 6-phosphate and D-lactate. The sequence is that of N-acetylmuramic acid 6-phosphate etherase from Bacillus anthracis (strain A0248).